The following is a 576-amino-acid chain: Arginine--tRNA ligase (576 aa).

Positions 122–132 match the 'HIGH' region motif; the sequence is PNVAKEMHVGH.

The protein belongs to the class-I aminoacyl-tRNA synthetase family. As to quaternary structure, monomer.

The protein localises to the cytoplasm. It carries out the reaction tRNA(Arg) + L-arginine + ATP = L-arginyl-tRNA(Arg) + AMP + diphosphate. In Mannheimia succiniciproducens (strain KCTC 0769BP / MBEL55E), this protein is Arginine--tRNA ligase.